The sequence spans 180 residues: Large ribosomal subunit protein uL5 (180 aa).

Belongs to the universal ribosomal protein uL5 family. As to quaternary structure, part of the 50S ribosomal subunit; part of the 5S rRNA/L5/L18/L25 subcomplex. Contacts the 5S rRNA and the P site tRNA. Forms a bridge to the 30S subunit in the 70S ribosome.

This is one of the proteins that bind and probably mediate the attachment of the 5S RNA into the large ribosomal subunit, where it forms part of the central protuberance. In the 70S ribosome it contacts protein S13 of the 30S subunit (bridge B1b), connecting the 2 subunits; this bridge is implicated in subunit movement. Contacts the P site tRNA; the 5S rRNA and some of its associated proteins might help stabilize positioning of ribosome-bound tRNAs. The polypeptide is Large ribosomal subunit protein uL5 (Roseiflexus sp. (strain RS-1)).